The primary structure comprises 138 residues: Small ribosomal subunit protein uS11c (138 aa).

A disordered region spans residues 1 to 23; the sequence is MKKPIPRIGSRRNGRIGSRKNGR.

It belongs to the universal ribosomal protein uS11 family. In terms of assembly, part of the 30S ribosomal subunit.

The protein resides in the plastid. It is found in the chloroplast. The chain is Small ribosomal subunit protein uS11c from Amborella trichopoda.